We begin with the raw amino-acid sequence, 244 residues long: ATP synthase subunit a, chloroplastic (244 aa).

5 helical membrane passes run 35 to 55, 92 to 112, 131 to 151, 196 to 216, and 217 to 237; these read QVLITSWVVIAILLGSAVIAV, VPFIGTMFLFIFVSNWSGALL, INTTVALALLTSVAYFYAGLS, LVVVVLVSLVPSVVPIPVMFL, and GLFISGIQALIFATLAAAYIG.

This sequence belongs to the ATPase A chain family. F-type ATPases have 2 components, CF(1) - the catalytic core - and CF(0) - the membrane proton channel. CF(1) has five subunits: alpha(3), beta(3), gamma(1), delta(1), epsilon(1). CF(0) has four main subunits: a, b, b' and c.

The protein resides in the plastid. Its subcellular location is the chloroplast thylakoid membrane. Functionally, key component of the proton channel; it plays a direct role in the translocation of protons across the membrane. The polypeptide is ATP synthase subunit a, chloroplastic (Gossypium barbadense (Sea Island cotton)).